A 226-amino-acid chain; its full sequence is ATP synthase subunit a (226 aa).

5 consecutive transmembrane segments (helical) span residues 18-38 (LSLN…SYWL), 74-94 (FISL…PYIF), 100-120 (LTLT…YGWI), 158-180 (LAVR…GNTG), and 197-217 (IALL…FAVL).

The protein belongs to the ATPase A chain family. In terms of assembly, F-type ATPases have 2 components, CF(1) - the catalytic core - and CF(0) - the membrane proton channel. CF(1) has five subunits: alpha(3), beta(3), gamma(1), delta(1), epsilon(1). CF(0) has three main subunits: a, b and c.

The protein localises to the mitochondrion inner membrane. Its function is as follows. Mitochondrial membrane ATP synthase (F(1)F(0) ATP synthase or Complex V) produces ATP from ADP in the presence of a proton gradient across the membrane which is generated by electron transport complexes of the respiratory chain. F-type ATPases consist of two structural domains, F(1) - containing the extramembraneous catalytic core and F(0) - containing the membrane proton channel, linked together by a central stalk and a peripheral stalk. During catalysis, ATP synthesis in the catalytic domain of F(1) is coupled via a rotary mechanism of the central stalk subunits to proton translocation. Key component of the proton channel; it may play a direct role in the translocation of protons across the membrane. The polypeptide is ATP synthase subunit a (mt:ATPase6) (Anopheles gambiae (African malaria mosquito)).